Consider the following 325-residue polypeptide: Post-GPI attachment to proteins factor 2-like (325 aa).

A run of 6 helical transmembrane segments spans residues 80–100 (VVTALLPLVTLFTCFVTAYVF), 130–150 (YFWRFSIALHIGPRIPIAFVY), 171–191 (LLITLILVLNCIEIASLGGVT), 205–225 (IFITFMVCSLCYMLATIKLNG), 243–263 (WKKILFAVSILSTVGLLVFFA), and 276–296 (WFAFFEYLIAIANMLFHFTII).

Belongs to the PGAP2 family.

It localises to the membrane. In Drosophila melanogaster (Fruit fly), this protein is Post-GPI attachment to proteins factor 2-like.